Consider the following 291-residue polypeptide: tRNA pseudouridine synthase B (291 aa).

The active-site Nucleophile is the aspartate 41.

The protein belongs to the pseudouridine synthase TruB family. Type 1 subfamily.

It catalyses the reaction uridine(55) in tRNA = pseudouridine(55) in tRNA. Responsible for synthesis of pseudouridine from uracil-55 in the psi GC loop of transfer RNAs. The chain is tRNA pseudouridine synthase B from Parasynechococcus marenigrum (strain WH8102).